A 463-amino-acid polypeptide reads, in one-letter code: Retinoic acid receptor RXR-gamma (463 aa).

The segment at 1–138 (MYGNYSHFMK…TSPGSLVKHI (138 aa)) is modulating. A disordered region spans residues 17-53 (GSPGHSGSTSMSPSAALSTGKPMDSHPSYTDTPVSAP). Residues 21-33 (HSGSTSMSPSAAL) show a composition bias toward polar residues. 2 consecutive NR C4-type zinc fingers follow at residues 139 to 159 (CAIC…CEGC) and 175 to 199 (CRDN…YQKC). The segment at residues 139 to 204 (CAICGDRSSG…RYQKCLVMGM (66 aa)) is a DNA-binding region (nuclear receptor). A hinge region spans residues 205–230 (KREAVQEERQRSRERAESEAECASSG). Residues 211–222 (EERQRSRERAES) are compositionally biased toward basic and acidic residues. The tract at residues 211–232 (EERQRSRERAESEAECASSGHE) is disordered. The 229-residue stretch at 231–459 (HEDMPVERIL…TFLMEMLETP (229 aa)) folds into the NR LBD domain.

This sequence belongs to the nuclear hormone receptor family. NR2 subfamily. As to quaternary structure, homodimer. Heterodimer with a RAR molecule. Binds DNA preferentially as a RAR/RXR heterodimer. Interacts with RARA. Post-translationally, acetylated by EP300.

It localises to the nucleus. It is found in the cytoplasm. Functionally, receptor for retinoic acid. Retinoic acid receptors bind as heterodimers to their target response elements in response to their ligands, all-trans or 9-cis retinoic acid, and regulate gene expression in various biological processes. The RAR/RXR heterodimers bind to the retinoic acid response elements (RARE) composed of tandem 5'-AGGTCA-3' sites known as DR1-DR5. The high affinity ligand for RXRs is 9-cis retinoic acid. The sequence is that of Retinoic acid receptor RXR-gamma (RXRG) from Sus scrofa (Pig).